The sequence spans 137 residues: Large ribosomal subunit protein uL16 (137 aa).

It belongs to the universal ribosomal protein uL16 family. In terms of assembly, part of the 50S ribosomal subunit.

Its function is as follows. Binds 23S rRNA and is also seen to make contacts with the A and possibly P site tRNAs. In Paracoccus denitrificans (strain Pd 1222), this protein is Large ribosomal subunit protein uL16.